Here is an 855-residue protein sequence, read N- to C-terminus: Lon protease (855 aa).

A Lon N-terminal domain is found at 45-288 (IYLLTVKNVV…ETFRFLNIEY (244 aa)). An ATP-binding site is contributed by 439 to 446 (GPPGVGKT). The Lon proteolytic domain occupies 674-855 (IQVPGVVTGL…NEVIDLSIIK (182 aa)). Residues Ser-761 and Lys-804 contribute to the active site.

The protein belongs to the peptidase S16 family. Homohexamer. Organized in a ring with a central cavity.

The protein localises to the cytoplasm. The enzyme catalyses Hydrolysis of proteins in presence of ATP.. Its function is as follows. ATP-dependent serine protease that mediates the selective degradation of mutant and abnormal proteins as well as certain short-lived regulatory proteins. Required for cellular homeostasis and for survival from DNA damage and developmental changes induced by stress. Degrades polypeptides processively to yield small peptide fragments that are 5 to 10 amino acids long. Binds to DNA in a double-stranded, site-specific manner. This is Lon protease from Karelsulcia muelleri (strain GWSS) (Sulcia muelleri).